A 401-amino-acid chain; its full sequence is Tryptophan synthase beta chain (401 aa).

Lys-88 is subject to N6-(pyridoxal phosphate)lysine.

Belongs to the TrpB family. As to quaternary structure, tetramer of two alpha and two beta chains. Requires pyridoxal 5'-phosphate as cofactor.

It carries out the reaction (1S,2R)-1-C-(indol-3-yl)glycerol 3-phosphate + L-serine = D-glyceraldehyde 3-phosphate + L-tryptophan + H2O. It participates in amino-acid biosynthesis; L-tryptophan biosynthesis; L-tryptophan from chorismate: step 5/5. The beta subunit is responsible for the synthesis of L-tryptophan from indole and L-serine. The chain is Tryptophan synthase beta chain from Shewanella denitrificans (strain OS217 / ATCC BAA-1090 / DSM 15013).